Consider the following 25-residue polypeptide: Flagellar filament core protein flaB3 (25 aa).

Belongs to the bacterial flagellin family. The flagellum consists of an outer layer composed of two sheath proteins, flaA1 (44 kDa) and flaA2 (35 kDa) around a core that contains three proteins flaB1 (37 kDa), flaB2 (34 kDa) and flaB3 (32 kDa).

The protein resides in the periplasmic flagellum. The protein localises to the periplasm. Functionally, component of the core of the flagella. This chain is Flagellar filament core protein flaB3 (flaB3), found in Brachyspira hyodysenteriae (Treponema hyodysenteriae).